The primary structure comprises 873 residues: Sine oculis-binding protein homolog (873 aa).

Residues 1–14 show a composition bias toward basic and acidic residues; it reads MAEMEKEGRPPENK. Residues 1–26 form a disordered region; that stretch reads MAEMEKEGRPPENKRSRKPAHPVKRE. 2 FCS-type zinc fingers span residues 142–180 and 216–256; these read DDVSNVQIMCAWCQKVGIKRYSLSMGSEVKCFCSEKCFA and FKNN…KCLN. Disordered stretches follow at residues 307–338, 413–485, 550–608, 742–766, and 779–811; these read ARRKAPSPASAAGQIQGPGPSASTTASPSDTA, RGPP…GAPL, KPPS…NQAQ, STEGSKNPEPPQDPKKPQPPEELAV, and SNCHLEGDTGKKAGEEPLAGGDKQDPNLNNPAD. Residues 312–338 are compositionally biased toward low complexity; it reads PSPASAAGQIQGPGPSASTTASPSDTA. Over residues 460–485 the composition is skewed to pro residues; that stretch reads IHPPTTPTMPGNPPGLLPPPPPGAPL. The segment covering 554 to 570 has biased composition (polar residues); the sequence is GFSSNGENFIPSNSSET. The span at 571–603 shows a compositional bias: low complexity; it reads PGGKPPNSSSSPRESKQGSSKPSDSSPSCSGQS. Residues 783-793 show a composition bias toward basic and acidic residues; the sequence is LEGDTGKKAGE.

Belongs to the SOBP family.

Implicated in development of the cochlea. This is Sine oculis-binding protein homolog from Gallus gallus (Chicken).